The primary structure comprises 297 residues: Cytidine deaminase (297 aa).

2 CMP/dCMP-type deaminase domains span residues 54–174 and 192–297; these read SSVE…FGPK and LRGD…YIEV. Residue 95–97 participates in substrate binding; that stretch reads NQE. Histidine 108 provides a ligand contact to Zn(2+). Catalysis depends on glutamate 110, which acts as the Proton donor. Residues cysteine 135 and cysteine 138 each contribute to the Zn(2+) site.

This sequence belongs to the cytidine and deoxycytidylate deaminase family. Homodimer. Zn(2+) is required as a cofactor.

It carries out the reaction cytidine + H2O + H(+) = uridine + NH4(+). The enzyme catalyses 2'-deoxycytidine + H2O + H(+) = 2'-deoxyuridine + NH4(+). Functionally, this enzyme scavenges exogenous and endogenous cytidine and 2'-deoxycytidine for UMP synthesis. This chain is Cytidine deaminase, found in Actinobacillus pleuropneumoniae serotype 5b (strain L20).